The chain runs to 127 residues: MPTIQQLIRNEREQARQKTKSPALKQCPQRRGVCTRVYTTTPKKPNSALRKVARVRLTSGFEVTAYIPGIGHNLQEHSVVMIRGGRVKDLPGVRYHIIRGTLDTAGVKDRKQGRSKYGTKRPKEAKK.

At aspartate 89 the chain carries 3-methylthioaspartic acid. The tract at residues 102–127 (LDTAGVKDRKQGRSKYGTKRPKEAKK) is disordered. Basic residues predominate over residues 113–127 (GRSKYGTKRPKEAKK).

Belongs to the universal ribosomal protein uS12 family. In terms of assembly, part of the 30S ribosomal subunit. Contacts proteins S8 and S17. May interact with IF1 in the 30S initiation complex.

In terms of biological role, with S4 and S5 plays an important role in translational accuracy. Functionally, interacts with and stabilizes bases of the 16S rRNA that are involved in tRNA selection in the A site and with the mRNA backbone. Located at the interface of the 30S and 50S subunits, it traverses the body of the 30S subunit contacting proteins on the other side and probably holding the rRNA structure together. The combined cluster of proteins S8, S12 and S17 appears to hold together the shoulder and platform of the 30S subunit. The sequence is that of Small ribosomal subunit protein uS12 from Nostoc punctiforme (strain ATCC 29133 / PCC 73102).